A 258-amino-acid polypeptide reads, in one-letter code: UPF0246 protein YaaA (258 aa).

This sequence belongs to the UPF0246 family.

In Escherichia coli O157:H7 (strain EC4115 / EHEC), this protein is UPF0246 protein YaaA.